Consider the following 184-residue polypeptide: Homeobox protein LOX10 (184 aa).

Disordered stretches follow at residues 1-29 (KIVS…PLQH) and 129-184 (YKTK…NKPG). Residues 76–135 (RRKRRILFSQAQIYELERRFRQQKYLSAPEREHLATFIGLTPTQVKIWFQNHRYKTKKSK) constitute a DNA-binding region (homeobox). 2 stretches are compositionally biased toward low complexity: residues 140-161 (NSPS…ASTT) and 174-184 (SNTTNNNNKPG).

The protein belongs to the NK-2 homeobox family. In terms of tissue distribution, expressed in a segmental pattern in the endoderm and in the cephalic nervous system.

It is found in the nucleus. In terms of biological role, may play a role in patterning the gut. This is Homeobox protein LOX10 (LOX10) from Helobdella triserialis (Leech).